The chain runs to 194 residues: 3-isopropylmalate dehydratase small subunit (194 aa).

It belongs to the LeuD family. LeuD type 1 subfamily. Heterodimer of LeuC and LeuD.

The enzyme catalyses (2R,3S)-3-isopropylmalate = (2S)-2-isopropylmalate. It functions in the pathway amino-acid biosynthesis; L-leucine biosynthesis; L-leucine from 3-methyl-2-oxobutanoate: step 2/4. Its function is as follows. Catalyzes the isomerization between 2-isopropylmalate and 3-isopropylmalate, via the formation of 2-isopropylmaleate. In Leuconostoc mesenteroides subsp. mesenteroides (strain ATCC 8293 / DSM 20343 / BCRC 11652 / CCM 1803 / JCM 6124 / NCDO 523 / NBRC 100496 / NCIMB 8023 / NCTC 12954 / NRRL B-1118 / 37Y), this protein is 3-isopropylmalate dehydratase small subunit.